The primary structure comprises 81 residues: Cytochrome c oxidase subunit 7A1, mitochondrial (81 aa).

Residues 1-21 (MRHLLGLPQLASRAFSTTVRQ) constitute a mitochondrion transit peptide. Residues 51–72 (ILYRLTMTLTVVGTGYSLYWLL) traverse the membrane as a helical segment.

Belongs to the cytochrome c oxidase VIIa family. In terms of assembly, component of the complex IV (CIV, cytochrome c oxidase). The complex exists as a monomer or a dimer and forms supercomplexes (SCs) in the inner mitochondrial membrane with NADH-ubiquinone oxidoreductase (complex I, CI) and ubiquinol-cytochrome c oxidoreductase (cytochrome b-c1 complex, complex III, CIII), resulting in different assemblies (supercomplex SCI(1)III(2)IV(1) and megacomplex MCI(2)III(2)IV(2)).

It localises to the mitochondrion inner membrane. The protein operates within energy metabolism; oxidative phosphorylation. Component of the mitochondrial respiratory complex IV (CIV, also named cytochrome c oxidase complex), the last enzyme in the mitochondrial electron transport chain which drives oxidative phosphorylation. The CIV complex is the component of the respiratory chain that catalyzes the reduction of oxygen to water. Acts as an assembly factor that specifically drives the homodimerization of CIV complexes, mediating the formation of mitochondrial respiratory supercomplexes (respirasomes) containing two CIV: supercomplxes with two molecules of CIV show improved activity. This chain is Cytochrome c oxidase subunit 7A1, mitochondrial, found in Danio rerio (Zebrafish).